Consider the following 633-residue polypeptide: Biosynthetic arginine decarboxylase (633 aa).

The residue at position 101 (Lys-101) is an N6-(pyridoxal phosphate)lysine. 284–294 (VDVGGGLGVDY) contacts substrate.

Belongs to the Orn/Lys/Arg decarboxylase class-II family. SpeA subfamily. Mg(2+) is required as a cofactor. The cofactor is pyridoxal 5'-phosphate.

The enzyme catalyses L-arginine + H(+) = agmatine + CO2. It participates in amine and polyamine biosynthesis; agmatine biosynthesis; agmatine from L-arginine: step 1/1. Catalyzes the biosynthesis of agmatine from arginine. This chain is Biosynthetic arginine decarboxylase, found in Aeromonas hydrophila subsp. hydrophila (strain ATCC 7966 / DSM 30187 / BCRC 13018 / CCUG 14551 / JCM 1027 / KCTC 2358 / NCIMB 9240 / NCTC 8049).